A 225-amino-acid polypeptide reads, in one-letter code: Pre-mRNA-splicing factor SPF27 (225 aa).

Positions 138–222 (SNDNLALMIE…QGDENKENIR (85 aa)) form a coiled coil.

Belongs to the SPF27 family. In terms of assembly, component of the pre-catalytic and catalytic spliceosome complexes. Component of the postcatalytic spliceosome P complex.

It is found in the nucleus. Functionally, required for pre-mRNA splicing as component of the activated spliceosome. May have a scaffolding role in the spliceosome assembly as it contacts all other components of the core complex. The polypeptide is Pre-mRNA-splicing factor SPF27 (bcas2) (Danio rerio (Zebrafish)).